We begin with the raw amino-acid sequence, 156 residues long: ATP synthase subunit b', chloroplastic (156 aa).

Residues 24 to 44 (ATLPLVAIQFILLMVLLNILL) traverse the membrane as a helical segment.

The protein belongs to the ATPase B chain family. As to quaternary structure, F-type ATPases have 2 components, F(1) - the catalytic core - and F(0) - the membrane proton channel. F(1) has five subunits: alpha(3), beta(3), gamma(1), delta(1), epsilon(1). F(0) has four main subunits: a(1), b(1), b'(1) and c(10-14). The alpha and beta chains form an alternating ring which encloses part of the gamma chain. F(1) is attached to F(0) by a central stalk formed by the gamma and epsilon chains, while a peripheral stalk is formed by the delta, b and b' chains.

The protein localises to the plastid. The protein resides in the chloroplast thylakoid membrane. Its function is as follows. F(1)F(0) ATP synthase produces ATP from ADP in the presence of a proton or sodium gradient. F-type ATPases consist of two structural domains, F(1) containing the extramembraneous catalytic core and F(0) containing the membrane proton channel, linked together by a central stalk and a peripheral stalk. During catalysis, ATP synthesis in the catalytic domain of F(1) is coupled via a rotary mechanism of the central stalk subunits to proton translocation. Component of the F(0) channel, it forms part of the peripheral stalk, linking F(1) to F(0). The b'-subunit is a diverged and duplicated form of b found in plants and photosynthetic bacteria. The protein is ATP synthase subunit b', chloroplastic of Phaeodactylum tricornutum (strain CCAP 1055/1).